The chain runs to 212 residues: Ribosome maturation factor RimM (212 aa).

Residues 105-181 enclose the PRC barrel domain; sequence EEEFYYADLI…IDSITAGLDN (77 aa). Residues 181–212 form a disordered region; it reads NAELSGEEDEAEGPESARGSRPRGPKSAGEPR.

It belongs to the RimM family. Binds ribosomal protein uS19.

The protein localises to the cytoplasm. An accessory protein needed during the final step in the assembly of 30S ribosomal subunit, possibly for assembly of the head region. Essential for efficient processing of 16S rRNA. May be needed both before and after RbfA during the maturation of 16S rRNA. It has affinity for free ribosomal 30S subunits but not for 70S ribosomes. The chain is Ribosome maturation factor RimM from Chelativorans sp. (strain BNC1).